The chain runs to 309 residues: Ribonuclease Z (309 aa).

Zn(2+) is bound by residues His-63, His-65, Asp-67, His-68, His-145, Asp-216, and His-274. Asp-67 (proton acceptor) is an active-site residue.

It belongs to the RNase Z family. Homodimer. Zn(2+) is required as a cofactor.

It carries out the reaction Endonucleolytic cleavage of RNA, removing extra 3' nucleotides from tRNA precursor, generating 3' termini of tRNAs. A 3'-hydroxy group is left at the tRNA terminus and a 5'-phosphoryl group is left at the trailer molecule.. Functionally, zinc phosphodiesterase, which displays some tRNA 3'-processing endonuclease activity. Probably involved in tRNA maturation, by removing a 3'-trailer from precursor tRNA. The chain is Ribonuclease Z from Streptococcus mutans serotype c (strain ATCC 700610 / UA159).